Reading from the N-terminus, the 600-residue chain is Elongation factor 4 (600 aa).

A tr-type G domain is found at 5 to 187; sequence KYIRNFSIIA…AIVNKLPPPK (183 aa). GTP is bound by residues 17-22 and 134-137; these read DHGKST and NKID.

It belongs to the TRAFAC class translation factor GTPase superfamily. Classic translation factor GTPase family. LepA subfamily.

Its subcellular location is the cell inner membrane. It carries out the reaction GTP + H2O = GDP + phosphate + H(+). Required for accurate and efficient protein synthesis under certain stress conditions. May act as a fidelity factor of the translation reaction, by catalyzing a one-codon backward translocation of tRNAs on improperly translocated ribosomes. Back-translocation proceeds from a post-translocation (POST) complex to a pre-translocation (PRE) complex, thus giving elongation factor G a second chance to translocate the tRNAs correctly. Binds to ribosomes in a GTP-dependent manner. The chain is Elongation factor 4 from Rickettsia felis (strain ATCC VR-1525 / URRWXCal2) (Rickettsia azadi).